We begin with the raw amino-acid sequence, 267 residues long: Phosphatidylglycerol--prolipoprotein diacylglyceryl transferase (267 aa).

3 helical membrane passes run 21–41 (VSLHWYGIMYLLGFGFAYWLG), 60–80 (LLFNGFWGVVLGGRIGDVFFY), and 95–115 (IWEGGMSFHGGLLGVIVAMLW). Arg-143 is an a 1,2-diacyl-sn-glycero-3-phospho-(1'-sn-glycerol) binding site. The next 2 membrane-spanning stretches (helical) occupy residues 203-223 (GSVAGLFLVGYGVFRFIVEYF) and 240-260 (GQLLSLPMIIGGLVIMVVAYY).

The protein belongs to the Lgt family.

It is found in the cell inner membrane. It carries out the reaction L-cysteinyl-[prolipoprotein] + a 1,2-diacyl-sn-glycero-3-phospho-(1'-sn-glycerol) = an S-1,2-diacyl-sn-glyceryl-L-cysteinyl-[prolipoprotein] + sn-glycerol 1-phosphate + H(+). Its pathway is protein modification; lipoprotein biosynthesis (diacylglyceryl transfer). Catalyzes the transfer of the diacylglyceryl group from phosphatidylglycerol to the sulfhydryl group of the N-terminal cysteine of a prolipoprotein, the first step in the formation of mature lipoproteins. The sequence is that of Phosphatidylglycerol--prolipoprotein diacylglyceryl transferase from Glaesserella parasuis serovar 5 (strain SH0165) (Haemophilus parasuis).